Here is a 239-residue protein sequence, read N- to C-terminus: Endoglucanase A (239 aa).

Residues methionine 1 to glycine 16 form the signal peptide.

It belongs to the glycosyl hydrolase 12 (cellulase H) family.

It catalyses the reaction Endohydrolysis of (1-&gt;4)-beta-D-glucosidic linkages in cellulose, lichenin and cereal beta-D-glucans.. Functionally, has carboxylmethylcellulase activity. This Aspergillus kawachii (strain NBRC 4308) (White koji mold) protein is Endoglucanase A (cekA).